The chain runs to 340 residues: Phosphoribosylformylglycinamidine cyclo-ligase (340 aa).

This sequence belongs to the AIR synthase family.

The protein localises to the cytoplasm. It carries out the reaction 2-formamido-N(1)-(5-O-phospho-beta-D-ribosyl)acetamidine + ATP = 5-amino-1-(5-phospho-beta-D-ribosyl)imidazole + ADP + phosphate + H(+). It functions in the pathway purine metabolism; IMP biosynthesis via de novo pathway; 5-amino-1-(5-phospho-D-ribosyl)imidazole from N(2)-formyl-N(1)-(5-phospho-D-ribosyl)glycinamide: step 2/2. The chain is Phosphoribosylformylglycinamidine cyclo-ligase from Streptococcus pyogenes serotype M1.